A 360-amino-acid chain; its full sequence is Ribosomal RNA large subunit methyltransferase F (360 aa).

Positions 1–38 (MTRSTTPPMRAKHSSAKRSPSRSAAKVNPVSVKPNKPL) are disordered. The span at 10–20 (RAKHSSAKRSP) shows a compositional bias: basic residues.

This sequence belongs to the methyltransferase superfamily. METTL16/RlmF family.

Its subcellular location is the cytoplasm. The enzyme catalyses adenosine(1618) in 23S rRNA + S-adenosyl-L-methionine = N(6)-methyladenosine(1618) in 23S rRNA + S-adenosyl-L-homocysteine + H(+). Its function is as follows. Specifically methylates the adenine in position 1618 of 23S rRNA. This chain is Ribosomal RNA large subunit methyltransferase F, found in Shewanella frigidimarina (strain NCIMB 400).